We begin with the raw amino-acid sequence, 367 residues long: Probable butyrate kinase (367 aa).

This sequence belongs to the acetokinase family.

The protein resides in the cytoplasm. It catalyses the reaction butanoate + ATP = butanoyl phosphate + ADP. The sequence is that of Probable butyrate kinase from Bacillus cereus (strain ATCC 10987 / NRS 248).